Here is a 152-residue protein sequence, read N- to C-terminus: UPF0260 protein BR1477/BS1330_I1471 (152 aa).

Belongs to the UPF0260 family.

This is UPF0260 protein BR1477/BS1330_I1471 from Brucella suis biovar 1 (strain 1330).